Here is a 600-residue protein sequence, read N- to C-terminus: Aspartate--tRNA(Asp/Asn) ligase (600 aa).

E174 provides a ligand contact to L-aspartate. Residues 198-201 are aspartate; that stretch reads QLFK. R220 contacts L-aspartate. Residues 220–222 and Q229 each bind ATP; that span reads RDE. H457 is an L-aspartate binding site. E491 is an ATP binding site. Residue R498 participates in L-aspartate binding. 543–546 serves as a coordination point for ATP; the sequence is GLDR.

Belongs to the class-II aminoacyl-tRNA synthetase family. Type 1 subfamily. As to quaternary structure, homodimer.

The protein localises to the cytoplasm. The catalysed reaction is tRNA(Asx) + L-aspartate + ATP = L-aspartyl-tRNA(Asx) + AMP + diphosphate. Functionally, aspartyl-tRNA synthetase with relaxed tRNA specificity since it is able to aspartylate not only its cognate tRNA(Asp) but also tRNA(Asn). Reaction proceeds in two steps: L-aspartate is first activated by ATP to form Asp-AMP and then transferred to the acceptor end of tRNA(Asp/Asn). The protein is Aspartate--tRNA(Asp/Asn) ligase of Burkholderia ambifaria (strain ATCC BAA-244 / DSM 16087 / CCUG 44356 / LMG 19182 / AMMD) (Burkholderia cepacia (strain AMMD)).